We begin with the raw amino-acid sequence, 471 residues long: MGKTLYQKLYDAHIVHQTPGETPLLYIDRHLVHEVTSPQAFDGLRAQRRRVRRPEHTFATMDHNVSTQSRDIHACGEMARVQMETLMANCREFGVQLYDLHHPHQGIVHVIGPEQGMTLPGSTIVCGDSHTATHGAFGALAFGIGTSEVEHVLATQTLKQDRARTMQVVIQGRCAEGISAKDIVLAVIGHLGHAGGTGYVVEFCGPAVEALSMEGRMTLCNMAIELGAKAGLIAPDETTFAYLQGRPFAPQGAQWQQAVDHWRTLRSDADARYDRTVTLQADDIAPQVTWGTNPGQVIAIDTPIPSPASLSDPIARASAHKALAYMDLQPGTRMSDVAIDRVFIGSCTNSRIEDLRAAAAVARGRRVAPGVQAMVVPGSGPVKAQAEAEGLDKIFTEAGFEWRLPGCSMCLAMNNDRLGSGERCASTSNRNFEGRQGRGGRTHLVSPAMAAAAAVCGHFADIRQFQEPAHD.

[4Fe-4S] cluster-binding residues include Cys-347, Cys-407, and Cys-410.

The protein belongs to the aconitase/IPM isomerase family. LeuC type 1 subfamily. In terms of assembly, heterodimer of LeuC and LeuD. [4Fe-4S] cluster serves as cofactor.

The catalysed reaction is (2R,3S)-3-isopropylmalate = (2S)-2-isopropylmalate. The protein operates within amino-acid biosynthesis; L-leucine biosynthesis; L-leucine from 3-methyl-2-oxobutanoate: step 2/4. In terms of biological role, catalyzes the isomerization between 2-isopropylmalate and 3-isopropylmalate, via the formation of 2-isopropylmaleate. This Edwardsiella ictaluri (strain 93-146) protein is 3-isopropylmalate dehydratase large subunit.